The sequence spans 438 residues: Trigger factor (438 aa).

In terms of domain architecture, PPIase FKBP-type spans 163–248; that stretch reads GDTAIIDFAG…VKEIKRKEIA (86 aa).

This sequence belongs to the FKBP-type PPIase family. Tig subfamily.

Its subcellular location is the cytoplasm. The enzyme catalyses [protein]-peptidylproline (omega=180) = [protein]-peptidylproline (omega=0). Its function is as follows. Involved in protein export. Acts as a chaperone by maintaining the newly synthesized protein in an open conformation. Functions as a peptidyl-prolyl cis-trans isomerase. The protein is Trigger factor of Pelotomaculum thermopropionicum (strain DSM 13744 / JCM 10971 / SI).